Reading from the N-terminus, the 448-residue chain is Putative F-box/LRR-repeat protein At5g25860 (448 aa).

The region spanning 11-58 (RDAVNCLPDEILAKILSYLPTKRAVSTSLISKRWRNLFALMIQLFESQ) is the F-box domain. LRR repeat units lie at residues 82 to 106 (QESF…SILC), 185 to 214 (FLHA…FLHD), 215 to 240 (LRGY…TVHF), 310 to 341 (TLSL…YFES), and 342 to 367 (NEKE…VLKG).

The protein is Putative F-box/LRR-repeat protein At5g25860 of Arabidopsis thaliana (Mouse-ear cress).